A 320-amino-acid polypeptide reads, in one-letter code: MAAHYLDFERPIADLESKIEELSRLSETAGPGAFDTEIQALRDRAQELRKEAYANLDAWQKTMVARHPQRPHLRDYVAGLIDEFVELRGDRKFADDQAIVGGLGRFRGQPVVVMGHEKGHDTTTRLKHNFGMARPEGYRKAVRLMDMAERFNLPVITFVDTAGAYPGLGAEERGQAEAIARSTERCLTLGVPMVATIVGEGGSGGAIALAGANRVLILEHSIYSVISPEGAASILWRDGARAKDAATQMRITAQDLIKLGIVDRIVEEPAGGAHSDTEAAIQAVGDAVEDELKAMAAMSPAELKKQRSDRFYAIGRAGLQ.

Positions 33 to 294 (AFDTEIQALR…GDAVEDELKA (262 aa)) constitute a CoA carboxyltransferase C-terminal domain.

Belongs to the AccA family. As to quaternary structure, acetyl-CoA carboxylase is a heterohexamer composed of biotin carboxyl carrier protein (AccB), biotin carboxylase (AccC) and two subunits each of ACCase subunit alpha (AccA) and ACCase subunit beta (AccD).

Its subcellular location is the cytoplasm. The catalysed reaction is N(6)-carboxybiotinyl-L-lysyl-[protein] + acetyl-CoA = N(6)-biotinyl-L-lysyl-[protein] + malonyl-CoA. It participates in lipid metabolism; malonyl-CoA biosynthesis; malonyl-CoA from acetyl-CoA: step 1/1. Its function is as follows. Component of the acetyl coenzyme A carboxylase (ACC) complex. First, biotin carboxylase catalyzes the carboxylation of biotin on its carrier protein (BCCP) and then the CO(2) group is transferred by the carboxyltransferase to acetyl-CoA to form malonyl-CoA. This chain is Acetyl-coenzyme A carboxylase carboxyl transferase subunit alpha, found in Caulobacter vibrioides (strain ATCC 19089 / CIP 103742 / CB 15) (Caulobacter crescentus).